A 364-amino-acid chain; its full sequence is tRNA N6-adenosine threonylcarbamoyltransferase (364 aa).

The Fe cation site is built by His-118 and His-122. Residues 140 to 144, Asp-173, Gly-186, and Asn-288 each bind substrate; that span reads LVSGG. A Fe cation-binding site is contributed by Asp-316.

The protein belongs to the KAE1 / TsaD family. The cofactor is Fe(2+).

It localises to the cytoplasm. The enzyme catalyses L-threonylcarbamoyladenylate + adenosine(37) in tRNA = N(6)-L-threonylcarbamoyladenosine(37) in tRNA + AMP + H(+). Its function is as follows. Required for the formation of a threonylcarbamoyl group on adenosine at position 37 (t(6)A37) in tRNAs that read codons beginning with adenine. Is involved in the transfer of the threonylcarbamoyl moiety of threonylcarbamoyl-AMP (TC-AMP) to the N6 group of A37, together with TsaE and TsaB. TsaD likely plays a direct catalytic role in this reaction. The polypeptide is tRNA N6-adenosine threonylcarbamoyltransferase (Cereibacter sphaeroides (strain ATCC 17023 / DSM 158 / JCM 6121 / CCUG 31486 / LMG 2827 / NBRC 12203 / NCIMB 8253 / ATH 2.4.1.) (Rhodobacter sphaeroides)).